The sequence spans 288 residues: Aminoglycoside 6-adenylyltransferase (288 aa).

It catalyses the reaction streptomycin + ATP = 6-O-adenylylstreptomycin + diphosphate. Its function is as follows. Mediates bacterial resistance to streptomycin, is probably a streptomycin 6-adenylyltransferase. The sequence is that of Aminoglycoside 6-adenylyltransferase from Campylobacter jejuni.